Reading from the N-terminus, the 253-residue chain is Acetylglutamate kinase (253 aa).

Residues glycine 40–glycine 41, arginine 62, and asparagine 154 each bind substrate.

The protein belongs to the acetylglutamate kinase family. ArgB subfamily.

Its subcellular location is the cytoplasm. The catalysed reaction is N-acetyl-L-glutamate + ATP = N-acetyl-L-glutamyl 5-phosphate + ADP. It functions in the pathway amino-acid biosynthesis; L-arginine biosynthesis; N(2)-acetyl-L-ornithine from L-glutamate: step 2/4. Catalyzes the ATP-dependent phosphorylation of N-acetyl-L-glutamate. The polypeptide is Acetylglutamate kinase (Staphylococcus saprophyticus subsp. saprophyticus (strain ATCC 15305 / DSM 20229 / NCIMB 8711 / NCTC 7292 / S-41)).